Consider the following 611-residue polypeptide: TANK-binding kinase 1-binding protein 1 (611 aa).

The tract at residues 1 to 280 (MESMFEDDIS…QDLASNQSEC (280 aa)) is homodimerization. Residues 48 to 162 (YGDIKERLGG…ALVETHLRQI (115 aa)) adopt a coiled-coil conformation. At Ser-184 the chain carries Phosphoserine. Residues 218 to 277 (TSVSVSELERRRLEEALEAAQGEARGAQLREEQLQAECERLQGELKQLQETRAQDLASNQ) adopt a coiled-coil conformation. The interval 281–330 (DMAWVKRVGDDQVNLALAYTELTEELGRLRELSSLQGRILRTLLQEQARN) is interaction with TBK1 and IKBKE. A disordered region spans residues 328–437 (ARNAGQRHSP…PPPPPGERTL (110 aa)). Residues 346–361 (PACPSPSPPARPPPCA) are compositionally biased toward pro residues. Positions 362–372 (PCQSPAAQRRS) are enriched in low complexity. Phosphoserine is present on residues Ser-365, Ser-372, Ser-379, Ser-385, Ser-400, and Ser-415. The segment covering 389–406 (PSCPSPVPQRRSPVPPSC) has biased composition (pro residues). The span at 416–433 (PVPPSCPAPQPRPPPPPG) shows a compositional bias: pro residues. Phosphoserine occurs at positions 500 and 530. The segment at 579 to 605 (IRSCPLCQLGFPVGYPDDALIKHIDSH) adopts a UBZ1-type zinc-finger fold. Zn(2+) contacts are provided by Cys-582, Cys-585, His-601, and His-605.

Homodimer. May form a heterodimer with NAP1. Interacts with TKB1 and IKBKE. Weakly interacts with DDX3X.

Adapter protein which constitutively binds TBK1 and IKBKE playing a role in antiviral innate immunity. Essential for the efficient induction of IRF-dependent transcription following infection with Sendai virus. The sequence is that of TANK-binding kinase 1-binding protein 1 from Mus musculus (Mouse).